The sequence spans 279 residues: NH(3)-dependent NAD(+) synthetase (279 aa).

Position 46–53 (Gly46–Ser53) interacts with ATP. Asp52 serves as a coordination point for Mg(2+). Deamido-NAD(+) is bound at residue Arg145. Residue Thr165 coordinates ATP. Glu170 contacts Mg(2+). Positions 178 and 185 each coordinate deamido-NAD(+). Positions 194 and 216 each coordinate ATP. His265 to Lys266 contributes to the deamido-NAD(+) binding site.

It belongs to the NAD synthetase family. In terms of assembly, homodimer.

The enzyme catalyses deamido-NAD(+) + NH4(+) + ATP = AMP + diphosphate + NAD(+) + H(+). It functions in the pathway cofactor biosynthesis; NAD(+) biosynthesis; NAD(+) from deamido-NAD(+) (ammonia route): step 1/1. In terms of biological role, catalyzes the ATP-dependent amidation of deamido-NAD to form NAD. Uses ammonia as a nitrogen source. In Rhodococcus jostii (strain RHA1), this protein is NH(3)-dependent NAD(+) synthetase.